Here is a 172-residue protein sequence, read N- to C-terminus: Protein-export protein SecB (172 aa).

This sequence belongs to the SecB family. Homotetramer, a dimer of dimers. One homotetramer interacts with 1 SecA dimer.

It localises to the cytoplasm. Functionally, one of the proteins required for the normal export of preproteins out of the cell cytoplasm. It is a molecular chaperone that binds to a subset of precursor proteins, maintaining them in a translocation-competent state. It also specifically binds to its receptor SecA. The polypeptide is Protein-export protein SecB (Xylella fastidiosa (strain Temecula1 / ATCC 700964)).